Consider the following 467-residue polypeptide: 3-isopropylmalate dehydratase large subunit (467 aa).

[4Fe-4S] cluster-binding residues include Cys348, Cys409, and Cys412.

Belongs to the aconitase/IPM isomerase family. LeuC type 1 subfamily. As to quaternary structure, heterodimer of LeuC and LeuD. Requires [4Fe-4S] cluster as cofactor.

It catalyses the reaction (2R,3S)-3-isopropylmalate = (2S)-2-isopropylmalate. The protein operates within amino-acid biosynthesis; L-leucine biosynthesis; L-leucine from 3-methyl-2-oxobutanoate: step 2/4. In terms of biological role, catalyzes the isomerization between 2-isopropylmalate and 3-isopropylmalate, via the formation of 2-isopropylmaleate. This Magnetococcus marinus (strain ATCC BAA-1437 / JCM 17883 / MC-1) protein is 3-isopropylmalate dehydratase large subunit.